The primary structure comprises 35 residues: Cecropin (35 aa).

At isoleucine 35 the chain carries Isoleucine amide.

Belongs to the cecropin family.

It is found in the secreted. In terms of biological role, cecropins have lytic and antibacterial activity against several Gram-positive and Gram-negative bacteria. This chain is Cecropin, found in Bombyx mori (Silk moth).